A 276-amino-acid polypeptide reads, in one-letter code: Putative serine/threonine-protein kinase R436 (276 aa).

In terms of domain architecture, Protein kinase spans 6 to 266; it reads YSLDKLIQNR…IKQKLNHFKT (261 aa). Residues 12–20 and Lys35 contribute to the ATP site; that span reads IQNRKSKRI. Catalysis depends on Asp132, which acts as the Proton acceptor.

It belongs to the protein kinase superfamily. Ser/Thr protein kinase family.

The enzyme catalyses L-seryl-[protein] + ATP = O-phospho-L-seryl-[protein] + ADP + H(+). The catalysed reaction is L-threonyl-[protein] + ATP = O-phospho-L-threonyl-[protein] + ADP + H(+). The chain is Putative serine/threonine-protein kinase R436 from Acanthamoeba polyphaga (Amoeba).